Here is a 312-residue protein sequence, read N- to C-terminus: DNA-directed RNA polymerase subunit alpha (312 aa).

Residues 1 to 229 (MLQYQIDRIE…ELFQPLATVT (229 aa)) are alpha N-terminal domain (alpha-NTD). Residues 239 to 312 (EPTAEAQIPL…IQIPQSRTSA (74 aa)) are alpha C-terminal domain (alpha-CTD).

It belongs to the RNA polymerase alpha chain family. In cyanobacteria the RNAP catalytic core is composed of 2 alpha, 1 beta, 1 beta', 1 gamma and 1 omega subunit. When a sigma factor is associated with the core the holoenzyme is formed, which can initiate transcription.

The enzyme catalyses RNA(n) + a ribonucleoside 5'-triphosphate = RNA(n+1) + diphosphate. DNA-dependent RNA polymerase catalyzes the transcription of DNA into RNA using the four ribonucleoside triphosphates as substrates. This Synechococcus sp. (strain WH7803) protein is DNA-directed RNA polymerase subunit alpha.